The following is a 502-amino-acid chain: Maturase K (502 aa).

This sequence belongs to the intron maturase 2 family. MatK subfamily.

The protein resides in the plastid. It localises to the chloroplast. Its function is as follows. Usually encoded in the trnK tRNA gene intron. Probably assists in splicing its own and other chloroplast group II introns. The polypeptide is Maturase K (Ipomoea purpurea (Common morning glory)).